The primary structure comprises 85 residues: Small ribosomal subunit protein uS17 (85 aa).

This sequence belongs to the universal ribosomal protein uS17 family. Part of the 30S ribosomal subunit.

In terms of biological role, one of the primary rRNA binding proteins, it binds specifically to the 5'-end of 16S ribosomal RNA. This Desulfosudis oleivorans (strain DSM 6200 / JCM 39069 / Hxd3) (Desulfococcus oleovorans) protein is Small ribosomal subunit protein uS17.